Reading from the N-terminus, the 329-residue chain is Tetraacyldisaccharide 4'-kinase (329 aa).

57–64 lines the ATP pocket; it reads TAGGSGKT.

Belongs to the LpxK family.

The catalysed reaction is a lipid A disaccharide + ATP = a lipid IVA + ADP + H(+). The protein operates within glycolipid biosynthesis; lipid IV(A) biosynthesis; lipid IV(A) from (3R)-3-hydroxytetradecanoyl-[acyl-carrier-protein] and UDP-N-acetyl-alpha-D-glucosamine: step 6/6. Its function is as follows. Transfers the gamma-phosphate of ATP to the 4'-position of a tetraacyldisaccharide 1-phosphate intermediate (termed DS-1-P) to form tetraacyldisaccharide 1,4'-bis-phosphate (lipid IVA). This chain is Tetraacyldisaccharide 4'-kinase, found in Thiobacillus denitrificans (strain ATCC 25259 / T1).